The chain runs to 117 residues: NADH-ubiquinone oxidoreductase chain 3 (117 aa).

3 consecutive transmembrane segments (helical) span residues 3 to 23, 56 to 76, and 85 to 105; these read LLLT…IVSF, FFLV…LLPL, and PMFT…GLIY.

This sequence belongs to the complex I subunit 3 family.

It localises to the mitochondrion membrane. It catalyses the reaction a ubiquinone + NADH + 5 H(+)(in) = a ubiquinol + NAD(+) + 4 H(+)(out). Its function is as follows. Core subunit of the mitochondrial membrane respiratory chain NADH dehydrogenase (Complex I) that is believed to belong to the minimal assembly required for catalysis. Complex I functions in the transfer of electrons from NADH to the respiratory chain. The immediate electron acceptor for the enzyme is believed to be ubiquinone. The chain is NADH-ubiquinone oxidoreductase chain 3 (MT-ND3) from Tetraodon nigroviridis (Spotted green pufferfish).